The chain runs to 389 residues: Apicidin F cluster transcription factor apf2 (389 aa).

Polar residues-rich tracts occupy residues 1–13 (MSPP…TITD) and 75–84 (PDSATPKPSL). Disordered regions lie at residues 1–27 (MSPP…VAQR), 65–84 (PQSV…KPSL), and 219–239 (EVPN…TKQP). Positions 12–38 (TDANERRKAQNRVAQRNYRSRQKLRVE) are basic DNA-binding region. ANK repeat units follow at residues 241-270 (EFKT…NIDT), 274-303 (HGRT…DLLM), 307-336 (SGVT…QQDR), and 357-386 (QNMT…DVNI).

Belongs to the bZIP family. Highly divergent.

The protein localises to the nucleus. Functionally, transcription factor that regulates the expression of the gene cluster that mediates the biosynthesis of apicidin F. Binds to the eight-base-pair motif 5'-TGACGTGA-3' called the 'Api-box' that is found in all promoters of the apicidin F cluster except in the promoter region of apf2 itself. The chain is Apicidin F cluster transcription factor apf2 from Gibberella fujikuroi (strain CBS 195.34 / IMI 58289 / NRRL A-6831) (Bakanae and foot rot disease fungus).